The following is a 450-amino-acid chain: Phosphoglucosamine mutase (450 aa).

S102 acts as the Phosphoserine intermediate in catalysis. Residues S102, D244, D246, and D248 each contribute to the Mg(2+) site. S102 is modified (phosphoserine).

Belongs to the phosphohexose mutase family. Mg(2+) is required as a cofactor. Post-translationally, activated by phosphorylation.

It carries out the reaction alpha-D-glucosamine 1-phosphate = D-glucosamine 6-phosphate. In terms of biological role, catalyzes the conversion of glucosamine-6-phosphate to glucosamine-1-phosphate. The chain is Phosphoglucosamine mutase from Desulfovibrio desulfuricans (strain ATCC 27774 / DSM 6949 / MB).